A 320-amino-acid chain; its full sequence is Formimidoylglutamase (320 aa).

Mn(2+) is bound by residues H125, D153, H155, D157, D244, and D246.

This sequence belongs to the arginase family. It depends on Mn(2+) as a cofactor.

The enzyme catalyses N-formimidoyl-L-glutamate + H2O = formamide + L-glutamate. Its pathway is amino-acid degradation; L-histidine degradation into L-glutamate; L-glutamate from N-formimidoyl-L-glutamate (hydrolase route): step 1/1. Catalyzes the conversion of N-formimidoyl-L-glutamate to L-glutamate and formamide. This Rhodococcus opacus (strain B4) protein is Formimidoylglutamase.